Reading from the N-terminus, the 1372-residue chain is MSVVNFYGQLSNTQQFDQIRINIASPDQVRSWSFGEVTKPETINYRTFKPEKDGLFCARIFGPVKDYECLCGKYKRMKNRGITCEKCGVEVTVSRVRRERMGHIELAAPVAHIWFLKSLPSRISTLLDMTMRDVEKILYFENYVVIDPGLSILQKGELLTEEELQKAKDKYGEDAFTASIGAEVIQQMLKELDFAKLKHELYEELQTTSSEVKKKKIVKRLKLVEDFLESENKPEWMIMDVLPVIPPEIRPLVMLDGGRFATSDLNELYRRVINRNNRLKKLIESKAPDIIVRNEKRMLQEAVDALFDNGRRGRAAKNANKRPFKSLSDMLKGKQGRFRQNLLGKRVDYSGRSVIVVGPELKLHQCGLPKKMALELFKPFIYSKLELYGIATTIKAAKRMVEAEKPEVWDVLEEVIREHPVLLNRAPTLHRLGIQAFEPLLIEGKAIQLHPLVCAAFNADFDGDQMAVHIPLSIEAQLEARVFMMSTNNILSPANGRPIIVPDKDIVLGLYYLTLAFDNEVGEGMMFSDLAEMEHALYNKFITIHTKIKYRRNQLNAEGKMVHVIIDTTYGRLMVGELLPSNPNIEFKFINKQLTKKDISLVIDLVYRHCGQKATVIFADQLMKLGFKYACSSGISFGMDDMVVPESKSTHINETQLEIKEFEQQYSNGLITYGEKYNKVVDAWSRCTDRVANDMMKEIATPRVSDEPNHQKINAIYMMAISGARGSFQQIKQLGGMRGLMTKSNGQIIQTPIISNFKEGLTEFECFNSANGMRKGQIDTALKTASSGYLTRKLVDVAQDCIITEKDCGTDKGIEVKSVIEGGEVIVPSSEKILGRTAAIDIFHPVTNALILNKGELINEAKLEQIESAGLDRIMIKSVLTCESTTGICSICYGRDLATGTLVSEGEAIGVIAAQSIGEPGTQLTMRTFHIGGAATKGAEVSSVEASYGAKVKIISRNVVINSEERKIVMSRNCELLLLDNNGNEKARHKIPYGARLLVDDGDMVVKTQKLAEWDPYTIPIITEKSGKVLFKDMVEGISIRDVTDEATGIPSKVIIESKQYSRGAELRPRIQLLDAEGAVITLSNGLEARYYLPVGAVLSVEDGVQISVGDIIARIPKESTTTKDITGGLPRVAELVEARRPKDHAVIAEVDGRVEFGKDYKSKRRIIIHPIDETMSIEYMVPKGKHVVVNEGDFVKKGDLLIDGNPVLQDILKVMGVEVLANYIVKEVQAVYRLQGVKIDDKHIEVIIRQMLQKVEITDSGGTTLLAGEKIDRHEFEEINKKAIKNGLKPAAAQLILQGITKASLQTRSFISAASFQETTRVLTEAAIAGKVDKLRGLKENVIVGRLVPAGTGYFMDKMRKAAVKLDEENI.

Positions 69, 71, 84, and 87 each coordinate Zn(2+). Residues aspartate 460, aspartate 462, and aspartate 464 each contribute to the Mg(2+) site. Zn(2+)-binding residues include cysteine 808, cysteine 882, cysteine 889, and cysteine 892.

It belongs to the RNA polymerase beta' chain family. In terms of assembly, the RNAP catalytic core consists of 2 alpha, 1 beta, 1 beta' and 1 omega subunit. When a sigma factor is associated with the core the holoenzyme is formed, which can initiate transcription. It depends on Mg(2+) as a cofactor. The cofactor is Zn(2+).

It catalyses the reaction RNA(n) + a ribonucleoside 5'-triphosphate = RNA(n+1) + diphosphate. In terms of biological role, DNA-dependent RNA polymerase catalyzes the transcription of DNA into RNA using the four ribonucleoside triphosphates as substrates. The sequence is that of DNA-directed RNA polymerase subunit beta' from Rickettsia akari (strain Hartford).